A 923-amino-acid polypeptide reads, in one-letter code: Isoleucine--tRNA ligase (923 aa).

Residues 57–67 carry the 'HIGH' region motif; that stretch reads PYANGHIHIGH. Position 560 (glutamate 560) interacts with L-isoleucyl-5'-AMP. Positions 601–605 match the 'KMSKS' region motif; the sequence is KMSKS. Lysine 604 is a binding site for ATP. Residues cysteine 895, cysteine 898, cysteine 915, and cysteine 918 each contribute to the Zn(2+) site.

Belongs to the class-I aminoacyl-tRNA synthetase family. IleS type 1 subfamily. As to quaternary structure, monomer. Zn(2+) serves as cofactor.

Its subcellular location is the cytoplasm. It catalyses the reaction tRNA(Ile) + L-isoleucine + ATP = L-isoleucyl-tRNA(Ile) + AMP + diphosphate. Catalyzes the attachment of isoleucine to tRNA(Ile). As IleRS can inadvertently accommodate and process structurally similar amino acids such as valine, to avoid such errors it has two additional distinct tRNA(Ile)-dependent editing activities. One activity is designated as 'pretransfer' editing and involves the hydrolysis of activated Val-AMP. The other activity is designated 'posttransfer' editing and involves deacylation of mischarged Val-tRNA(Ile). The protein is Isoleucine--tRNA ligase of Geobacter sulfurreducens (strain ATCC 51573 / DSM 12127 / PCA).